The sequence spans 338 residues: GTPase Obg (338 aa).

The Obg domain maps to 1 to 159; that stretch reads MSFIDEVKIN…RWIRMELKLM (159 aa). The segment at 58-79 is disordered; it reads DLRQHPHQKAGRGKNGMGSDRH. The region spanning 160-331 is the OBG-type G domain; it reads ADVGLLGMPS…LLDDIAFNLW (172 aa). Residues 166 to 173, 191 to 195, 213 to 216, 283 to 286, and 312 to 314 each bind GTP; these read GMPSVGKS, FTTLK, DIPG, NKID, and SAA. Mg(2+) is bound by residues serine 173 and threonine 193.

The protein belongs to the TRAFAC class OBG-HflX-like GTPase superfamily. OBG GTPase family. As to quaternary structure, monomer. Mg(2+) serves as cofactor.

It is found in the cytoplasm. An essential GTPase which binds GTP, GDP and possibly (p)ppGpp with moderate affinity, with high nucleotide exchange rates and a fairly low GTP hydrolysis rate. Plays a role in control of the cell cycle, stress response, ribosome biogenesis and in those bacteria that undergo differentiation, in morphogenesis control. This is GTPase Obg from Citrifermentans bemidjiense (strain ATCC BAA-1014 / DSM 16622 / JCM 12645 / Bem) (Geobacter bemidjiensis).